The sequence spans 215 residues: Pyridoxine/pyridoxamine 5'-phosphate oxidase (215 aa).

Residues 9–12 and Lys-69 contribute to the substrate site; that span reads RRDY. Residues 64–69, 79–80, Lys-86, and Gln-108 each bind FMN; these read RVLLLK and FT. Positions 126, 130, and 134 each coordinate substrate. FMN is bound by residues 143 to 144 and Trp-188; that span reads QS. 194-196 serves as a coordination point for substrate; that stretch reads RLH. Arg-198 is an FMN binding site.

It belongs to the pyridoxamine 5'-phosphate oxidase family. As to quaternary structure, homodimer. The cofactor is FMN.

The catalysed reaction is pyridoxamine 5'-phosphate + O2 + H2O = pyridoxal 5'-phosphate + H2O2 + NH4(+). It catalyses the reaction pyridoxine 5'-phosphate + O2 = pyridoxal 5'-phosphate + H2O2. Its pathway is cofactor metabolism; pyridoxal 5'-phosphate salvage; pyridoxal 5'-phosphate from pyridoxamine 5'-phosphate: step 1/1. The protein operates within cofactor metabolism; pyridoxal 5'-phosphate salvage; pyridoxal 5'-phosphate from pyridoxine 5'-phosphate: step 1/1. In terms of biological role, catalyzes the oxidation of either pyridoxine 5'-phosphate (PNP) or pyridoxamine 5'-phosphate (PMP) into pyridoxal 5'-phosphate (PLP). This chain is Pyridoxine/pyridoxamine 5'-phosphate oxidase, found in Pseudomonas putida (strain W619).